The following is a 450-amino-acid chain: MREILHIQGGQCGNQIGAKFWEVVCAEHGIDPTGRYTGDSDLQLERINVYYNEASCGRFVPRAVLMDLEPGTMDSLRSGPYGQTFRPDNFVFGQSGAGNNWAKGHYTEGAELIDSVLDVVRKEAENCDCLQGFQVCHSLGGGTGSGMGTLLISKIREEYPDRMMLTFSVFPSPKVSDTVVEPYNATLSVHQLVENADECMVLDNEALYDICFRTLKLTTPSFGDLNHLISATMSGVTCCLRFPGQLNSDLRKLAVNLIPFPRLHFFMVGFAPLTSRGSQQYRSLTVPELTQQMWDSKNMMCAADPRHGRYLTASAMFRGKMSTKEVDEQMLNVQNKNSSYFVEWIPNNVKSTVCDIPPTGLKMASTFIGNSTSIQEMFRRVSEQFTAMFRRKAFLHWYTGEGMDEMEFTEAESNMNDLVSEYQQYQDATADEEGDYEDEEEGEYQQEEEY.

Glutamine 11, glutamate 69, serine 138, glycine 142, threonine 143, glycine 144, asparagine 204, and asparagine 226 together coordinate GTP. Residue glutamate 69 participates in Mg(2+) binding. Residues 420–450 form a disordered region; it reads SEYQQYQDATADEEGDYEDEEEGEYQQEEEY. Over residues 429–450 the composition is skewed to acidic residues; the sequence is TADEEGDYEDEEEGEYQQEEEY.

Belongs to the tubulin family. In terms of assembly, dimer of alpha and beta chains. A typical microtubule is a hollow water-filled tube with an outer diameter of 25 nm and an inner diameter of 15 nM. Alpha-beta heterodimers associate head-to-tail to form protofilaments running lengthwise along the microtubule wall with the beta-tubulin subunit facing the microtubule plus end conferring a structural polarity. Microtubules usually have 13 protofilaments but different protofilament numbers can be found in some organisms and specialized cells. Mg(2+) is required as a cofactor.

It localises to the cytoplasm. It is found in the cytoskeleton. Tubulin is the major constituent of microtubules, a cylinder consisting of laterally associated linear protofilaments composed of alpha- and beta-tubulin heterodimers. Microtubules grow by the addition of GTP-tubulin dimers to the microtubule end, where a stabilizing cap forms. Below the cap, tubulin dimers are in GDP-bound state, owing to GTPase activity of alpha-tubulin. The sequence is that of Tubulin beta-3 chain (TUBB3) from Arabidopsis thaliana (Mouse-ear cress).